Here is a 98-residue protein sequence, read N- to C-terminus: Large ribosomal subunit protein uL23 (98 aa).

It belongs to the universal ribosomal protein uL23 family. As to quaternary structure, part of the 50S ribosomal subunit. Contacts protein L29, and trigger factor when it is bound to the ribosome.

Its function is as follows. One of the early assembly proteins it binds 23S rRNA. One of the proteins that surrounds the polypeptide exit tunnel on the outside of the ribosome. Forms the main docking site for trigger factor binding to the ribosome. The chain is Large ribosomal subunit protein uL23 from Borreliella afzelii (strain PKo) (Borrelia afzelii).